The sequence spans 417 residues: UPF0761 membrane protein Veis_3782 (417 aa).

A run of 6 helical transmembrane segments spans residues isoleucine 54 to phenylalanine 74, glycine 111 to isoleucine 131, valine 151 to leucine 171, phenylalanine 192 to tyrosine 212, glycine 226 to glycine 246, and leucine 261 to valine 281.

The protein belongs to the UPF0761 family.

It is found in the cell inner membrane. The polypeptide is UPF0761 membrane protein Veis_3782 (Verminephrobacter eiseniae (strain EF01-2)).